Here is a 289-residue protein sequence, read N- to C-terminus: Fatty acid elongase 3-like (289 aa).

The next 7 membrane-spanning stretches (helical) occupy residues 35 to 55 (SFLFTSISLYIAVSSSLHILL), 75 to 95 (SLLMSILSATIFAGILLSAAA), 129 to 149 (VFFWSYVFYLTRFLHMFRTIF), 157 to 176 (LAVSQLFCNSVMAFTSFLWL), 181 to 203 (SYQILAILSTTLVYSVVYGYRFW), 205 to 225 (GFGLPGSAFPSFVVNCQLVLV), and 248 to 268 (IGAWGLNSVLNGAILLLFLNF).

The protein belongs to the ELO family.

It is found in the membrane. Probable very long-chain fatty acid (VLCFA) elongase that controls VLCFA composition and functions to inhibit abscisic acid (ABA)-mediated stress responses, including regulation of stomatal aperture, maintenance of primary root growth and inhibition of germination. VLCFA pathway and products may function as signaling components acting upstream of sphingosine-1-phosphate, ceramide and the heterotrimeric G-protein complex, in lipid-mediated regulation of abiotic stress signaling. This Arabidopsis thaliana (Mouse-ear cress) protein is Fatty acid elongase 3-like (HOS3).